The sequence spans 102 residues: ATP-dependent Clp protease adapter protein ClpS (102 aa).

This sequence belongs to the ClpS family. Binds to the N-terminal domain of the chaperone ClpA.

Involved in the modulation of the specificity of the ClpAP-mediated ATP-dependent protein degradation. The sequence is that of ATP-dependent Clp protease adapter protein ClpS from Shewanella putrefaciens (strain CN-32 / ATCC BAA-453).